The chain runs to 304 residues: Glutaminase (304 aa).

The substrate site is built by Ser-63, Asn-113, Glu-157, Asn-164, Tyr-188, Tyr-240, and Val-258.

It belongs to the glutaminase family. As to quaternary structure, homotetramer.

It carries out the reaction L-glutamine + H2O = L-glutamate + NH4(+). The sequence is that of Glutaminase from Paraburkholderia phytofirmans (strain DSM 17436 / LMG 22146 / PsJN) (Burkholderia phytofirmans).